The sequence spans 1188 residues: DNA-directed RNA polymerase subunit beta (1188 aa).

Belongs to the RNA polymerase beta chain family. In terms of assembly, the RNAP catalytic core consists of 2 alpha, 1 beta, 1 beta' and 1 omega subunit. When a sigma factor is associated with the core the holoenzyme is formed, which can initiate transcription.

The catalysed reaction is RNA(n) + a ribonucleoside 5'-triphosphate = RNA(n+1) + diphosphate. In terms of biological role, DNA-dependent RNA polymerase catalyzes the transcription of DNA into RNA using the four ribonucleoside triphosphates as substrates. This is DNA-directed RNA polymerase subunit beta from Streptococcus pyogenes serotype M18 (strain MGAS8232).